The sequence spans 455 residues: Probable glycine dehydrogenase (decarboxylating) subunit 1 (455 aa).

This sequence belongs to the GcvP family. N-terminal subunit subfamily. As to quaternary structure, the glycine cleavage system is composed of four proteins: P, T, L and H. In this organism, the P 'protein' is a heterodimer of two subunits.

The enzyme catalyses N(6)-[(R)-lipoyl]-L-lysyl-[glycine-cleavage complex H protein] + glycine + H(+) = N(6)-[(R)-S(8)-aminomethyldihydrolipoyl]-L-lysyl-[glycine-cleavage complex H protein] + CO2. Functionally, the glycine cleavage system catalyzes the degradation of glycine. The P protein binds the alpha-amino group of glycine through its pyridoxal phosphate cofactor; CO(2) is released and the remaining methylamine moiety is then transferred to the lipoamide cofactor of the H protein. This Francisella tularensis subsp. tularensis (strain FSC 198) protein is Probable glycine dehydrogenase (decarboxylating) subunit 1.